The chain runs to 431 residues: Histidine--tRNA ligase (431 aa).

The protein belongs to the class-II aminoacyl-tRNA synthetase family. As to quaternary structure, homodimer.

It is found in the cytoplasm. The enzyme catalyses tRNA(His) + L-histidine + ATP = L-histidyl-tRNA(His) + AMP + diphosphate + H(+). This Neisseria meningitidis serogroup A / serotype 4A (strain DSM 15465 / Z2491) protein is Histidine--tRNA ligase.